We begin with the raw amino-acid sequence, 74 residues long: MANLKFLLCLFLICVSLSRSSASRPMFPNADGIKRGRMMIEAEEVLKASMEKLMERGFNESMRLSPGGPDPRHH.

A signal peptide spans methionine 1–alanine 22. Asparagine 59 is a glycosylation site (N-linked (GlcNAc...) asparagine). Hydroxyproline occurs at positions 66 and 69. A glycan (O-linked (Ara...) hydroxyproline) is linked at proline 69.

This sequence belongs to the CLV3/ESR signal peptide family. Post-translationally, the O-glycosylation (arabinosylation) of the hydroxyproline Pro-69 enhances binding affinity of the CLE1p peptide for its receptor. As to expression, mostly expressed in roots and seedlings, and, to a lower extent, in stems and apex.

The protein localises to the secreted. It is found in the extracellular space. Its function is as follows. Extracellular signal peptide that regulates cell fate. The chain is CLAVATA3/ESR (CLE)-related protein 1 from Arabidopsis thaliana (Mouse-ear cress).